Reading from the N-terminus, the 949-residue chain is Leucine--tRNA ligase (949 aa).

Positions 68 to 79 (PYPSGEGLHVGH) match the 'HIGH' region motif. The tract at residues 540–562 (VPDYSPVSFDPDDAGSEPSPPLG) is disordered. The 'KMSKS' region motif lies at 722–726 (KIGKS). K725 is a binding site for ATP.

It belongs to the class-I aminoacyl-tRNA synthetase family.

Its subcellular location is the cytoplasm. It catalyses the reaction tRNA(Leu) + L-leucine + ATP = L-leucyl-tRNA(Leu) + AMP + diphosphate. This chain is Leucine--tRNA ligase, found in Mycolicibacterium gilvum (strain PYR-GCK) (Mycobacterium gilvum (strain PYR-GCK)).